The chain runs to 113 residues: uncharacterized protein (113 aa).

It to H.influenzae HI_1053 and P.denitrificans COX locus Uncharacterized protein 4.

This is an uncharacterized protein from Cupriavidus necator (strain ATCC 17699 / DSM 428 / KCTC 22496 / NCIMB 10442 / H16 / Stanier 337) (Ralstonia eutropha).